The following is a 157-amino-acid chain: MSSVVETVTDLVTPILQDHDFYLYDLEFVKEGKSWYLRVYINKDGGITLEDCALVSDELSEALDNVEPDPIPQAYFLEVSSPGAERPLKKEEDYQRAIDHYIHISLYQQINGQKVYEGTLTQLSDKEITLDYLDKTRHRQITIDRQKIAQARLAIKF.

Belongs to the RimP family.

The protein localises to the cytoplasm. Functionally, required for maturation of 30S ribosomal subunits. The chain is Ribosome maturation factor RimP from Limosilactobacillus reuteri (strain DSM 20016) (Lactobacillus reuteri).